Consider the following 155-residue polypeptide: Protein phosphatase 1 regulatory subunit 17 (155 aa).

The segment at Lys41–Ile73 is disordered. The span at Ser58–Pro69 shows a compositional bias: basic and acidic residues. 2 positions are modified to phosphothreonine; by PKG/PRKG1: Thr68 and Thr119.

Post-translationally, substrate for cGMP-dependent protein kinase. Phosphorylated by PRKG1 isoform alpha. Phosphorylation of Thr-68 and Thr-119 is required for its phosphatase activity. In terms of processing, substrate for cGMP-dependent protein kinase. In terms of tissue distribution, highly expressed in cerebellum.

Its function is as follows. Inhibits phosphatase activities of protein phosphatase 1 (PP1) and protein phosphatase 2A (PP2A) complexes. The chain is Protein phosphatase 1 regulatory subunit 17 (PPP1R17) from Homo sapiens (Human).